Here is a 2344-residue protein sequence, read N- to C-terminus: Mucin-4 (2344 aa).

The signal sequence occupies residues 1–30 (MRGPHGVSWRVPWLCLSCLCSCLLLLPVNT). A compositionally biased stretch (low complexity) spans 32–46 (TTSAPKTSTALPSST). 5 disordered regions span residues 32–760 (TTSA…QGSI), 773–1036 (QKMS…TTST), 1072–1130 (VPSL…TPSV), 1171–1197 (STVA…MGAS), and 1233–1269 (SGLT…TVPP). Over residues 47 to 100 (NPSQMTSQVSNPTASSYRMTKNTGQASPMVTSSSITTLPQSQHTGSMKTTRNPQ) the composition is skewed to polar residues. Residues 81–1006 (ITTLPQSQHT…VSTLVTSTQE (926 aa)) form a variable number of tandem repeats (VNTR) region. Composition is skewed to low complexity over residues 101–116 (TTGT…ASSS) and 123–137 (TTSQ…TTTS). A glycan (O-linked (GalNAc...) threonine) is linked at Thr133. The segment covering 142-225 (ESSSPPSTSV…GGMKTTRNPQ (84 aa)) has biased composition (polar residues). Over residues 226 to 273 (TTGTTEVTTTLSASSSDHPTSSPESTPGNTAPRTTETSTTTTTKVLMT) the composition is skewed to low complexity. Residues 274 to 305 (SLQQKLPTGSTLGTSTQELTTLPQSQHTGIMK) show a composition bias toward polar residues. 2 stretches are compositionally biased toward low complexity: residues 306–322 (TTSR…TTRT) and 335–349 (TSSQ…TTTS). Residues 373–436 (SGDTGHTMAV…GMKTTRNPQR (64 aa)) are compositionally biased toward polar residues. Thr391 and Thr392 each carry an O-linked (GalNAc...) threonine glycan. Residues 437–446 (TTPTEVTTST) are compositionally biased toward low complexity. Over residues 447 to 468 (LSASSSDQVQVETTSRATLSPD) the composition is skewed to polar residues. A compositionally biased stretch (low complexity) spans 469 to 492 (TTTTSHAPSVSSSSPSPPSTEGTS). Thr470 carries O-linked (GalNAc...) threonine glycosylation. Ser479 is a glycosylation site (O-linked (GalNAc...) serine). Polar residues predominate over residues 493–509 (VDTGLTTAVTTQDSTPA). Residues 510-546 (TTQGSLTSSSQTLSTVSPLSTSTQETSTQELTSSQSQ) show a composition bias toward low complexity. Residues 547–580 (HTGSMKTTHNPQTTRNTEVTTTLSASSSDQVQVE) show a composition bias toward polar residues. Residues 581–594 (TTSQTTLSDATTTS) are compositionally biased toward low complexity. A compositionally biased stretch (polar residues) spans 599–682 (ESSSPPSTSD…GGMKTTRNPQ (84 aa)). Composition is skewed to low complexity over residues 683–698 (TTGT…ASSS) and 705–719 (TSSQ…TTTS). Composition is skewed to polar residues over residues 724 to 760 (ESSS…QGSI) and 773 to 807 (QKMS…SSRP). Positions 808–828 (QTTSVTSTLSSSPSGSTPVQT) are enriched in low complexity. The segment covering 829–868 (RSVTSSSDERTNPTSSGVSNTSPATTEVLTPTSSPESTPG) has biased composition (polar residues). A compositionally biased stretch (low complexity) spans 869-915 (NTAPRTTETSTTTTTKVLMTSLQQKLPTGSTLGTSTPTEVTTTLSAS). Over residues 916–994 (SSDQVQVETT…ISVTPSTQKM (79 aa)) the composition is skewed to polar residues. Residues 995-1015 (STVSTLVTSTQELTSSQSQRT) are compositionally biased toward low complexity. The segment covering 1016-1026 (GSMGTSSKPQA) has biased composition (polar residues). Over residues 1027–1036 (TTPTEVTTST) the composition is skewed to low complexity. The segment covering 1072–1083 (VPSLMHSSKPQA) has biased composition (polar residues). Residues 1084 to 1096 (TTPTEVTTSTLSS) are compositionally biased toward low complexity. Residues 1097–1116 (FSRGSTQTQTVSWETSSSGK) show a composition bias toward polar residues. Low complexity-rich tracts occupy residues 1118-1130 (TAPS…TPSV), 1175-1188 (HRQS…HSQS), and 1233-1267 (SGLT…RSTV). The NIDO domain maps to 1332–1492 (GHSGVMLISL…TGYTGRCGPT (161 aa)). The segment at 1574-1597 (GRHRTGLAAGTTSPLSASSTSSGG) is disordered. Residues 1580–1597 (LAAGTTSPLSASSTSSGG) are compositionally biased toward low complexity. Residues 1609 to 1804 (RPAWTFGDPH…HYGMTSETNG (196 aa)) enclose the VWFD domain. N-linked (GlcNAc...) asparagine glycans are attached at residues Asn1644, Asn1660, Asn1672, Asn1689, Asn1698, Asn1704, Asn1715, Asn1724, Asn1759, Asn1780, Asn1787, Asn1829, Asn1874, Asn1926, Asn1951, Asn1974, Asn1981, Asn2029, and Asn2048. Residues 2047–2086 (QNHSCPVNYCYNHGHCDISGPPDCQPTCTCAPAFTGNRCF) form the EGF-like 1 domain. Intrachain disulfides connect Cys2051-Cys2062, Cys2056-Cys2074, and Cys2076-Cys2085. 2 N-linked (GlcNAc...) asparagine glycosylation sites follow: Asn2114 and Asn2121. A helical membrane pass occupies residues 2173 to 2193 (GPLIHYLNNQLISAVMEAFLL). An N-linked (GlcNAc...) asparagine glycan is attached at Asn2227. In terms of domain architecture, EGF-like 2 spans 2256-2295 (VSPCSEGYCHNGGQCKHLPDGPQCTCATFSIYTSWGERCE). 3 cysteine pairs are disulfide-bonded: Cys2259/Cys2270, Cys2264/Cys2279, and Cys2281/Cys2294. The chain crosses the membrane as a helical span at residues 2301–2321 (LGAFFGILFGALGALLLLAIL).

A heterodimeric complex, composed of a mucin-4 alpha chain and a cysteine-rich transmembrane mucin-4 beta chain. Mucin-4 beta chain interacts with ERBB2 via the EGF-like domain 1. In nonpolarized cells, associates with ERBB2 and ERBB3. Proteolytically cleaved into 2 subunits, mucin-4 alpha chain and mucin-4 beta chain. In terms of processing, mucin-4 alpha subunit is highly O-glycosylated. Post-translationally, mucin-4 beta subunit is predominantly N-glycosylated. As to expression, expression is developmentally regulated in the mammary gland, dramatically increases in the lactating gland compared with the virgin mammary gland, while decreasing again during mammary gland involution. Expressed in 13762 ascites cells. Overexpressed in some aggressive mammary tumors. Overexpression seems to block cell-cell and cell-matrix interactions to protect tumor cells from immune surveillance, and to promote metastasis.

The protein localises to the cell membrane. It localises to the secreted. Membrane-bound mucin, a family of highly glycosylated proteins that constitute the major component of the mucus, the slimy and viscous secretion covering epithelial surfaces. These glycoproteins play important roles in the protection of the epithelium and are implicated in epithelial renewal and differentiation. Regulates cellular behavior through both anti-adhesive effects on cell-cell and cell-extracellular matrix interactions and its ability to act as an intramembrane ligand for ERBB2. Plays an important role in proliferation and differentiation of epithelial cells by inducing specific phosphorylation of ERBB2. In polarized epithelial cells, segregates ERBB2 and other ERBB receptors and prevents ERBB2 from acting as a coreceptor. The interaction with ERBB2 leads to enhanced expression of CDKN1B. The formation of a MUC4-ERBB2-ERBB3-NRG1 complex leads to down-regulation of CDKN1B, resulting in repression of apoptosis and stimulation of proliferation. Its ability to promote tumor growth may be mainly due to repression of apoptosis as opposed to proliferation. This is Mucin-4 (Muc4) from Rattus norvegicus (Rat).